The primary structure comprises 173 residues: Putative phosphoesterase GTNG_0743 (173 aa).

Histidine 34 (proton donor) is an active-site residue. 2 consecutive short sequence motifs (HXTX) follow at residues 34-37 and 115-118; these read HITL and HITI. Catalysis depends on histidine 115, which acts as the Proton acceptor.

Belongs to the 2H phosphoesterase superfamily. YjcG family.

The polypeptide is Putative phosphoesterase GTNG_0743 (Geobacillus thermodenitrificans (strain NG80-2)).